The following is a 372-amino-acid chain: MDPDRQSDIAALDTTLTTVERVVNVDGLRGRIQQLESDASDPKLWDDQARAQKVTSDLSHAQNELRRVEELRSRLDDLPVLYELAAEEEGAGSSEAFAEADAELAKLREDIAGMEVRTLLSGEYDEREALVNIRSGAGGVDAADWAEMLMRMYIRWAEQHDYPVEVFDTSYAEEAGIKSATFAVHAPYAYGNLSVEQGTHRLVRISPFDNQSRRQTSFADVEVLPVVETTDHIDIPEGDVRVDVYRSSGPGGQSVNTTDSAVRLTHIPTGIVVTCQNEKSQLQNKVSAMRVLQAKLLERKRLEERAEMDALKGDGGSSWGNQMRSYVLHPYQMVKDLRTEYEVGNPAAVLDGDIDGFLEAGIRWRNQKVDDE.

Gln-253 carries the N5-methylglutamine modification.

It belongs to the prokaryotic/mitochondrial release factor family. Methylated by PrmC. Methylation increases the termination efficiency of RF2.

Its subcellular location is the cytoplasm. In terms of biological role, peptide chain release factor 2 directs the termination of translation in response to the peptide chain termination codons UGA and UAA. This is Peptide chain release factor 2 from Mycolicibacterium gilvum (strain PYR-GCK) (Mycobacterium gilvum (strain PYR-GCK)).